A 168-amino-acid chain; its full sequence is Disulfide bond formation protein B (168 aa).

The Cytoplasmic portion of the chain corresponds to 1–11 (MSNPMRPVRSI). The chain crosses the membrane as a helical span at residues 12-28 (LLAIFTGCAGLIGYALY). Topologically, residues 29–46 (LQLVENLLPCPLCVVQRM) are periplasmic. The cysteines at positions 38 and 41 are disulfide-linked. Residues 47–63 (AYWLIGLTALAGFFHTP) traverse the membrane as a helical segment. Residues 64-69 (ETTGRR) lie on the Cytoplasmic side of the membrane. Residues 70–87 (IYAGLMAVFAFTGGLVAL) traverse the membrane as a helical segment. The Periplasmic portion of the chain corresponds to 88–143 (RQAWLVRYPEAFECGISPEEAFLNALPLARWWPVMFEANGDCADVTWKFASLTLPD). Residues Cys101 and Cys129 are joined by a disulfide bond. The helical transmembrane segment at 144–162 (WSAIFFMILAALSIYVLLV) threads the bilayer. Residues 163–168 (RENQRE) lie on the Cytoplasmic side of the membrane.

The protein belongs to the DsbB family.

Its subcellular location is the cell inner membrane. In terms of biological role, required for disulfide bond formation in some periplasmic proteins. Acts by oxidizing the DsbA protein. The polypeptide is Disulfide bond formation protein B (Nitrosospira multiformis (strain ATCC 25196 / NCIMB 11849 / C 71)).